The primary structure comprises 645 residues: Acetyl-coenzyme A synthetase (645 aa).

CoA is bound by residues 190–193 (RGGR) and Thr-308. ATP-binding positions include 384–386 (GEP), 408–413 (DTWWQT), Asp-497, and Arg-512. Ser-520 contributes to the CoA binding site. Arg-523 is a binding site for ATP. Residues Val-534, His-536, and Val-539 each contribute to the Mg(2+) site. N6-acetyllysine is present on Lys-606.

It belongs to the ATP-dependent AMP-binding enzyme family. Mg(2+) serves as cofactor. Post-translationally, acetylated. Deacetylation by the SIR2-homolog deacetylase activates the enzyme.

The enzyme catalyses acetate + ATP + CoA = acetyl-CoA + AMP + diphosphate. Functionally, catalyzes the conversion of acetate into acetyl-CoA (AcCoA), an essential intermediate at the junction of anabolic and catabolic pathways. AcsA undergoes a two-step reaction. In the first half reaction, AcsA combines acetate with ATP to form acetyl-adenylate (AcAMP) intermediate. In the second half reaction, it can then transfer the acetyl group from AcAMP to the sulfhydryl group of CoA, forming the product AcCoA. The chain is Acetyl-coenzyme A synthetase from Alkalilimnicola ehrlichii (strain ATCC BAA-1101 / DSM 17681 / MLHE-1).